Reading from the N-terminus, the 292-residue chain is Histamine N-methyltransferase (292 aa).

Substrate is bound at residue Glu28. The S-adenosyl-L-methionine site is built by Gly60, Glu89, Gln94, Ser120, and Ile142. A substrate-binding site is contributed by Asn283.

The protein belongs to the class I-like SAM-binding methyltransferase superfamily. HNMT family. Monomer.

Its subcellular location is the cytoplasm. It carries out the reaction histamine + S-adenosyl-L-methionine = N(tau)-methylhistamine + S-adenosyl-L-homocysteine + H(+). Functionally, inactivates histamine by N-methylation. Plays an important role in degrading histamine and in regulating the airway response to histamine. The polypeptide is Histamine N-methyltransferase (HNMT) (Homo sapiens (Human)).